The chain runs to 520 residues: Cytosol aminopeptidase (520 aa).

Zn(2+)-binding residues include L200, M201, K280, and D285. 4 residues coordinate substrate: K280, D285, S290, and K292. D285 is a Mg(2+) binding site. Residue K292 is part of the active site. Residues R301, D303, D362, and E364 each coordinate Zn(2+). Residues D303 and D362 each coordinate substrate. Residues D362 and E364 each contribute to the Mg(2+) site. R366 is a catalytic residue.

It belongs to the peptidase M17 family. Homohexamer. It depends on Zn(2+) as a cofactor. The cofactor is Mn(2+).

It localises to the cytoplasm. The catalysed reaction is Release of an N-terminal amino acid, Xaa-|-Yaa-, in which Xaa is preferably Leu, but may be other amino acids including Pro although not Arg or Lys, and Yaa may be Pro. Amino acid amides and methyl esters are also readily hydrolyzed, but rates on arylamides are exceedingly low.. It catalyses the reaction an S-substituted L-cysteinylglycine + H2O = an S-substituted L-cysteine + glycine. It carries out the reaction L-cysteinylglycine + H2O = L-cysteine + glycine. The enzyme catalyses S-benzyl-L-cysteinylglycine + H2O = S-benzyl-L-cysteine + glycine. The catalysed reaction is Release of N-terminal proline from a peptide.. In terms of biological role, cytosolic metallopeptidase that catalyzes the removal of unsubstituted N-terminal hydrophobic amino acids from various peptides. The presence of Zn(2+) ions is essential for the peptidase activity, and the association with other cofactors can modulate the substrate spectificity of the enzyme. For instance, in the presence of Mn(2+), it displays a specific Cys-Gly hydrolyzing activity of Cys-Gly-S-conjugates. Involved in the metabolism of glutathione and in the degradation of glutathione S-conjugates, which may play a role in the control of the cell redox status. The sequence is that of Cytosol aminopeptidase (lap3) from Xenopus tropicalis (Western clawed frog).